Here is a 475-residue protein sequence, read N- to C-terminus: Adenosylhomocysteinase (475 aa).

Substrate is bound by residues Thr63, Asp138, and Glu199. 200 to 202 (TTT) serves as a coordination point for NAD(+). Residues Lys229 and Asp233 each coordinate substrate. Residues Asn234, 263–268 (GYGDVG), Glu286, Asn321, 342–344 (IGH), and Asn389 contribute to the NAD(+) site.

It belongs to the adenosylhomocysteinase family. It depends on NAD(+) as a cofactor.

It is found in the cytoplasm. It catalyses the reaction S-adenosyl-L-homocysteine + H2O = L-homocysteine + adenosine. Its pathway is amino-acid biosynthesis; L-homocysteine biosynthesis; L-homocysteine from S-adenosyl-L-homocysteine: step 1/1. May play a key role in the regulation of the intracellular concentration of adenosylhomocysteine. The chain is Adenosylhomocysteinase from Solibacter usitatus (strain Ellin6076).